Reading from the N-terminus, the 835-residue chain is Leucine--tRNA ligase (835 aa).

A 'HIGH' region motif is present at residues 36-46 (PYPSGKIHVGH). Positions 602-606 (KMSKS) match the 'KMSKS' region motif. Lys605 contributes to the ATP binding site.

It belongs to the class-I aminoacyl-tRNA synthetase family.

Its subcellular location is the cytoplasm. The catalysed reaction is tRNA(Leu) + L-leucine + ATP = L-leucyl-tRNA(Leu) + AMP + diphosphate. This chain is Leucine--tRNA ligase, found in Rickettsia massiliae (strain Mtu5).